We begin with the raw amino-acid sequence, 414 residues long: TnpB-like protein MJ1635 (414 aa).

Residues Cys-329, Cys-332, Cys-346, and Cys-349 each coordinate Zn(2+).

The protein in the N-terminal section; belongs to the transposase 2 family. It in the C-terminal section; belongs to the transposase 35 family.

The protein is TnpB-like protein MJ1635 of Methanocaldococcus jannaschii (strain ATCC 43067 / DSM 2661 / JAL-1 / JCM 10045 / NBRC 100440) (Methanococcus jannaschii).